A 754-amino-acid polypeptide reads, in one-letter code: RNA exonuclease 5 (754 aa).

The tract at residues Met-1 to Pro-36 is disordered. The Exonuclease domain occupies Leu-222 to Val-370. RRM domains lie at Ser-488–Thr-562 and Gly-583–Gln-662.

This is RNA exonuclease 5 (Rexo5) from Rattus norvegicus (Rat).